A 196-amino-acid polypeptide reads, in one-letter code: Holliday junction branch migration complex subunit RuvA (196 aa).

Residues 1-63 (MIASVRGEVL…EDSMTLYGFP (63 aa)) form a domain I region. Positions 64 to 138 (DGETRDLFLT…DKVGVAATGG (75 aa)) are domain II. The interval 138–142 (GALST) is flexible linker. Residues 143 to 196 (NGHAVRSPVVEALVGLGFAAKQAEEATDTVLAANHDATTSSALRSALSLLGKAR) form a domain III region.

This sequence belongs to the RuvA family. In terms of assembly, homotetramer. Forms an RuvA(8)-RuvB(12)-Holliday junction (HJ) complex. HJ DNA is sandwiched between 2 RuvA tetramers; dsDNA enters through RuvA and exits via RuvB. An RuvB hexamer assembles on each DNA strand where it exits the tetramer. Each RuvB hexamer is contacted by two RuvA subunits (via domain III) on 2 adjacent RuvB subunits; this complex drives branch migration. In the full resolvosome a probable DNA-RuvA(4)-RuvB(12)-RuvC(2) complex forms which resolves the HJ.

It localises to the cytoplasm. In terms of biological role, the RuvA-RuvB-RuvC complex processes Holliday junction (HJ) DNA during genetic recombination and DNA repair, while the RuvA-RuvB complex plays an important role in the rescue of blocked DNA replication forks via replication fork reversal (RFR). RuvA specifically binds to HJ cruciform DNA, conferring on it an open structure. The RuvB hexamer acts as an ATP-dependent pump, pulling dsDNA into and through the RuvAB complex. HJ branch migration allows RuvC to scan DNA until it finds its consensus sequence, where it cleaves and resolves the cruciform DNA. This is Holliday junction branch migration complex subunit RuvA from Mycobacterium bovis (strain ATCC BAA-935 / AF2122/97).